The primary structure comprises 548 residues: MGSLSSEEDDEVSSERCGSYSPSADISESESSSSFSCHRFDGEGASSSIPSSPRVVAGRGFYFPAPVMLPVIGGKDVVWDDKQPDNDLSEIEMMKERFAKLLLGEDMSGGGKGVCTALAISNAITNLSATVFGELWRLEPLAPQKKAMWRRELEWLLCVSDSIVELIPSIQQFPGGGTYEIMETRPRSDLYANLPALKKLDAMLIDMLDAFSDTEFWYTDRGIVLGDCDKDSYNSPASVRQEDKWWLPCPKVPPNGLSEEARKKLQQCRDFANQILKAALAINSGVLAEMEIPDPYLETLPKSGKECLGEIIYQYLTANKFSPECLLDCLDLSSEHQTLEIANRIEAAVHVWRQKNGRRHKKQAKLKLSSWGGKVKGLVNDNERNDFLVQRAETLLQSLRIRFPGLPQTTLDMNKIQYNKDVGQSILESYSRVMESMAFNITARIDDVLYVDDAMRRSISVTESLSLFSINGLNPQKAFSVQSSPHGSPFATPALSVASRSPRRAPPLYSVKRNGTREKGIVGETEKAWSYAGNLSSRRVTGVTPERD.

A compositionally biased stretch (acidic residues) spans 1-12 (MGSLSSEEDDEV). The segment at 1–38 (MGSLSSEEDDEVSSERCGSYSPSADISESESSSSFSCH) is disordered. Positions 19 to 36 (SYSPSADISESESSSSFS) are enriched in low complexity. Residues 81–462 (DKQPDNDLSE…DAMRRSISVT (382 aa)) enclose the PRONE domain. The interval 458-548 (SISVTESLSL…RVTGVTPERD (91 aa)) is involved in auto-inhibition. 2 positions are modified to phosphoserine: S460 and S480.

As to quaternary structure, interacts with ARAC10/ROP11 and FER. Forms a complex with ARAC11/ROP1 and PRK2. Interacts in vitro (via PRONE domain) with PRK1, PRK2, PRK3 and PRK4. The C-terminal region is also important for the interaction with PRK2. Post-translationally, phosphorylated at Ser-460 and Ser-480 by PRK2. Expressed in roots, cotyledons, leaves, stems, sepals, petals, anthers, pollen grains, stigmas and siliques.

It is found in the cytoplasm. Its subcellular location is the cytosol. It localises to the cell membrane. Its activity is regulated as follows. Phosphorylation at Ser-460 and Ser-480 by PRK2 releases ROPGEF1 auto-inhibition, thereby activating ROPGEF1, which in turn activates ARAC11/ROP1. In terms of biological role, guanine-nucleotide exchange factor (GEF) that acts as an activator of Rop (Rho of plants) GTPases by promoting the exchange of GDP for GTP. Acts downstream of PRK2 in the control of polarized pollen tube growth by activating ARAC11/ROP1. In association with ROPGEF4, acts as a specific regulator of ARAC10/ROP11 function in ABA-mediated stomatal closure. May play a role in the Rac/Rop-signaling pathway that controls ROS-mediated root hair development. The polypeptide is Rop guanine nucleotide exchange factor 1 (ROPGEF1) (Arabidopsis thaliana (Mouse-ear cress)).